The following is a 76-amino-acid chain: Alpha-amylase inhibitor Z-2685 (76 aa).

Disulfide bonds link cysteine 9/cysteine 25 and cysteine 43/cysteine 70.

In terms of biological role, inhibits mammalian alpha-amylases specifically but has no action on plant and microbial alpha-amylases. This Streptomyces rochei (Streptomyces parvullus) protein is Alpha-amylase inhibitor Z-2685.